The chain runs to 203 residues: V-type ATP synthase subunit D (203 aa).

It belongs to the V-ATPase D subunit family.

Produces ATP from ADP in the presence of a proton gradient across the membrane. This Streptococcus pneumoniae serotype 19F (strain G54) protein is V-type ATP synthase subunit D.